A 207-amino-acid chain; its full sequence is Large ribosomal subunit protein bL25 (207 aa).

This sequence belongs to the bacterial ribosomal protein bL25 family. CTC subfamily. Part of the 50S ribosomal subunit; part of the 5S rRNA/L5/L18/L25 subcomplex. Contacts the 5S rRNA. Binds to the 5S rRNA independently of L5 and L18.

This is one of the proteins that binds to the 5S RNA in the ribosome where it forms part of the central protuberance. This is Large ribosomal subunit protein bL25 from Azorhizobium caulinodans (strain ATCC 43989 / DSM 5975 / JCM 20966 / LMG 6465 / NBRC 14845 / NCIMB 13405 / ORS 571).